The primary structure comprises 128 residues: Cyclin-dependent protein kinase inhibitor SMR1 (128 aa).

Residues 17-74 form a disordered region; the sequence is PIKIRSKTSKTKKDEGDDDEDDLRCSTPTSQEHKIPAVVDSPPPPPRKPRPPPSAPSA. Over residues 57–71 the composition is skewed to pro residues; the sequence is SPPPPPRKPRPPPSA.

Interacts with CDKB1-1. Interacts with CPR5. In terms of tissue distribution, expressed in roots, leaves, stems, siliques and flowers. Expressed in the root elongation zone.

It is found in the nucleus. Its function is as follows. Probable cyclin-dependent protein kinase (CDK) inhibitor that functions as a repressor of mitosis in the endoreduplication cell cycle. Cooperates with SIM and SMR2 to promote endoreplication during leaf development. Specifically regulates endoreduplication in epidermal pavement cells to produce the cell size pattern. Is necessary for giant cell formation. Positive regulator of effector-triggered immunity (ETI). This chain is Cyclin-dependent protein kinase inhibitor SMR1, found in Arabidopsis thaliana (Mouse-ear cress).